Here is a 911-residue protein sequence, read N- to C-terminus: Valine--tRNA ligase (911 aa).

The 'HIGH' region motif lies at 57-67 (PTVSGSLHVGH). The 'KMSKS' region signature appears at 599–603 (KMSKS). K602 is an ATP binding site. Positions 882-911 (EESAAEDAPETEVAVEASELGEPPAKKPKH) are disordered.

The protein belongs to the class-I aminoacyl-tRNA synthetase family. ValS type 2 subfamily. In terms of assembly, monomer.

It is found in the cytoplasm. The enzyme catalyses tRNA(Val) + L-valine + ATP = L-valyl-tRNA(Val) + AMP + diphosphate. Catalyzes the attachment of valine to tRNA(Val). As ValRS can inadvertently accommodate and process structurally similar amino acids such as threonine, to avoid such errors, it has a 'posttransfer' editing activity that hydrolyzes mischarged Thr-tRNA(Val) in a tRNA-dependent manner. This chain is Valine--tRNA ligase, found in Bifidobacterium longum (strain DJO10A).